Reading from the N-terminus, the 493-residue chain is MINSSFILLASTVTSKKVGRITQIIGPVMDVAFPSGNMPNIYNALVVKGKNAAGQDIDVTCEVQQLLGDNKVRAVAMSATDGLMRGMDVIDTGSALSVPVGEVTLGRIFNVLGEPVDNMGPVNATVTSPIHRSAPAFTQLDTKLSIFETGIKVVDLLAPYRRGGKIGLFGGAGVGKTVLIMELINNIAKAHGGVSVFGGVGERTREGNDLYMEMKESKVINEENLGESKVALVYGQMNEPPGARMRVGLTALTMAEYFRDVNKQDVLLFIDNIFRFVQAGSEVSALLGRMPSAVGYQPTLSTEMGGLQERITSTKEGSITSIQAVYVPADDLTDPAPATTFAHLDATTVLSRGLAAKGIYPAVDPLDSTSTMLQPWIVGEEHYETAQGVKKTLQRYKELQDIIAILGLDELSEEDRLLVARARKIERFLSQPFFVAEVFTGSPGKYVSLVETIKGFQMILSGDLDSLPEQAFYLVGNIDEATAKAATLQVENS.

170–177 (GGAGVGKT) is a binding site for ATP.

The protein belongs to the ATPase alpha/beta chains family. In terms of assembly, F-type ATPases have 2 components, CF(1) - the catalytic core - and CF(0) - the membrane proton channel. CF(1) has five subunits: alpha(3), beta(3), gamma(1), delta(1), epsilon(1). CF(0) has four main subunits: a(1), b(1), b'(1) and c(9-12).

The protein localises to the plastid. Its subcellular location is the chloroplast thylakoid membrane. The catalysed reaction is ATP + H2O + 4 H(+)(in) = ADP + phosphate + 5 H(+)(out). Its function is as follows. Produces ATP from ADP in the presence of a proton gradient across the membrane. The catalytic sites are hosted primarily by the beta subunits. The sequence is that of ATP synthase subunit beta, chloroplastic from Chaetosphaeridium globosum (Charophycean green alga).